Consider the following 550-residue polypeptide: Lariat debranching enzyme (550 aa).

A divalent metal cation-binding residues include Cys-8 and His-10. The residue at position 28 (Ser-28) is a Phosphoserine. A divalent metal cation-binding residues include Asp-39 and Asn-84. The segment at 124-154 (SGIFKSHDYRKGHFECPPYNSSTIRSIYHVR) is lariat recognition loop. Lys-128 carries the post-translational modification N6-acetyllysine. 3 residues coordinate a divalent metal cation: His-174, His-226, and His-228. Positions 390–550 (EHHQCGEYEQ…AVDDGDASAE (161 aa)) are disordered. A compositionally biased stretch (polar residues) spans 416–426 (NTDTSALSSIN). Positions 430–445 (IMLDEEEEEEEEEEEA) are enriched in acidic residues. A compositionally biased stretch (polar residues) spans 450-483 (SDMNTPSVEPASDQASDLSTSFSDIRNLPSSMFV). Phosphoserine is present on residues Ser-470, Ser-480, Ser-484, Ser-485, Ser-489, Ser-491, Ser-494, Ser-505, and Ser-520. Residues 498-528 (KCGETVESGDEKDLAKFPLKRLSDEHEPEQR) show a composition bias toward basic and acidic residues.

It belongs to the lariat debranching enzyme family. Requires Fe(2+) as cofactor. It depends on Zn(2+) as a cofactor. Mn(2+) is required as a cofactor.

It localises to the nucleus. Its activity is regulated as follows. Active in presence of diverse metals including Fe(2+), Zn(2+), Mn(2+). Also activated by Ca(2+). Binds two metal cations in two adjacent alpha and beta metal-binding pockets. In terms of biological role, cleaves the 2'-5' phosphodiester linkage at the branch point of excised lariat intron RNA and converts them into linear molecules that can be subsequently degraded, thereby facilitating ribonucleotide turnover. Linked to its role in pre-mRNA processing mechanism, may also participate in retrovirus replication and have an antiviral cell-intrinsic defense function. The chain is Lariat debranching enzyme (Dbr1) from Mus musculus (Mouse).